Here is a 214-residue protein sequence, read N- to C-terminus: Calcineurin B homologous protein 3 (214 aa).

G2 is lipidated: N-myristoyl glycine. The EF-hand domain maps to 110–145; the sequence is CRTDKLRFLFNMYDSDNDNKITLEEYRKVVEELLSG. Ca(2+) is bound by residues D123, D125, D127, K129, and E134.

This sequence belongs to the calcineurin regulatory subunit family. CHP subfamily. Monomer. Homodimer.

The protein localises to the nucleus. Its subcellular location is the cytoplasm. It localises to the membrane. It is found in the cell membrane. The protein resides in the cell projection. The protein localises to the lamellipodium. Its subcellular location is the ruffle membrane. Functions as an integral cofactor in cell pH regulation by controlling plasma membrane-type Na(+)/H(+) exchange activity. Promotes the induction of hematopoietic stem cell differentiation toward megakaryocytic lineage. Essential for the coupling of ERK cascade activation with the expression of ETS family genes in megakaryocytic differentiation. Also involved in granulocytic differentiation in a ERK-dependent manner. Inhibits the phosphatase activity of calcineurin. The polypeptide is Calcineurin B homologous protein 3 (Xenopus laevis (African clawed frog)).